The following is a 176-amino-acid chain: Peptidyl-prolyl cis-trans isomerase cyp5 (176 aa).

Residues 10 to 173 form the PPIase cyclophilin-type domain; the sequence is FFDVAVNGKP…AKVEIVDCGE (164 aa).

The protein belongs to the cyclophilin-type PPIase family.

It carries out the reaction [protein]-peptidylproline (omega=180) = [protein]-peptidylproline (omega=0). In terms of biological role, PPIases accelerate the folding of proteins. It catalyzes the cis-trans isomerization of proline imidic peptide bonds in oligopeptides. This is Peptidyl-prolyl cis-trans isomerase cyp5 (cyp5) from Rhizopus delemar (strain RA 99-880 / ATCC MYA-4621 / FGSC 9543 / NRRL 43880) (Mucormycosis agent).